The primary structure comprises 465 residues: UPF0422 protein CBU_0937 (465 aa).

An N-terminal signal peptide occupies residues 1–23 (MTSKLVISALGLCVSGALSTTLA). Residues 28–60 (TTNQQITKRIDYLQAQINELRTQQKKERQKKKA) are a coiled coil.

The protein belongs to the UPF0422 family.

In Coxiella burnetii (strain RSA 493 / Nine Mile phase I), this protein is UPF0422 protein CBU_0937.